The primary structure comprises 108 residues: PTS system fructose-like EIIB component 1 (108 aa).

A PTS EIIB type-2 domain is found at 1–101 (MSKKLIALCA…AAGIIKEIEE (101 aa)). The active-site Phosphocysteine intermediate is cysteine 11. Cysteine 11 is modified (phosphocysteine; by EIIA).

It localises to the cytoplasm. The enzyme catalyses D-fructose(out) + N(pros)-phospho-L-histidyl-[protein] = D-fructose 1-phosphate(in) + L-histidyl-[protein]. Functionally, the phosphoenolpyruvate-dependent sugar phosphotransferase system (sugar PTS), a major carbohydrate active transport system, catalyzes the phosphorylation of incoming sugar substrates concomitantly with their translocation across the cell membrane. The enzyme II FryABC PTS system is involved in fructose transport. This Shigella flexneri protein is PTS system fructose-like EIIB component 1 (fryB).